A 417-amino-acid chain; its full sequence is MYKKVRVVLENGDVFEGVMLPPTQFSDSDIVVLKLKNGYNVGFKKGRIKEIVELGEVQTAPLSAKPMPKIEGEKVWLLATGGTILSRVDYVTGGVYPTLSVDYLFEVLGGLEAPIEAEEVTAKFSEDMTPALWGVIAERVAEAFKKGARGVVVLHGTDTMQYTAAALAFAFKSAPGPIALVGAQRSSDRPSTDAVLNLKAAIAVTARAPFAESVVVMHKTSGDTVVAVHRGTRVRKMHTSRRDTFQSINTTPIAEYYPEKELLQVLTDVYKERGGLDYTAKFEEAVALVKFYPGMHPRLLEALLEVGMKGVVIEGTGFGHVGEGVLPAVKKLIDAGVIVAMTSQTLYGRVNLYVYRRGRELLSMGVIPLEDMLPETAYAKMSWALANFKREEVPRVLTTPIAYEMSPRSDPLVFGGL.

The 328-residue stretch at Glu73 to Pro400 folds into the Asparaginase/glutaminase domain. Residues Thr83, Thr157, Asp158, and Lys236 contribute to the active site.

The protein belongs to the asparaginase 1 family. GatD subfamily. Heterodimer of GatD and GatE.

The catalysed reaction is L-glutamyl-tRNA(Gln) + L-glutamine + ATP + H2O = L-glutaminyl-tRNA(Gln) + L-glutamate + ADP + phosphate + H(+). Allows the formation of correctly charged Gln-tRNA(Gln) through the transamidation of misacylated Glu-tRNA(Gln) in organisms which lack glutaminyl-tRNA synthetase. The reaction takes place in the presence of glutamine and ATP through an activated gamma-phospho-Glu-tRNA(Gln). The GatDE system is specific for glutamate and does not act on aspartate. In Pyrobaculum aerophilum (strain ATCC 51768 / DSM 7523 / JCM 9630 / CIP 104966 / NBRC 100827 / IM2), this protein is Glutamyl-tRNA(Gln) amidotransferase subunit D.